Consider the following 215-residue polypeptide: Methylthioribulose-1-phosphate dehydratase (215 aa).

2 residues coordinate Zn(2+): histidine 103 and histidine 105.

This sequence belongs to the aldolase class II family. MtnB subfamily. The cofactor is Zn(2+).

It catalyses the reaction 5-(methylsulfanyl)-D-ribulose 1-phosphate = 5-methylsulfanyl-2,3-dioxopentyl phosphate + H2O. Its pathway is amino-acid biosynthesis; L-methionine biosynthesis via salvage pathway; L-methionine from S-methyl-5-thio-alpha-D-ribose 1-phosphate: step 2/6. Its function is as follows. Catalyzes the dehydration of methylthioribulose-1-phosphate (MTRu-1-P) into 2,3-diketo-5-methylthiopentyl-1-phosphate (DK-MTP-1-P). In Persephonella marina (strain DSM 14350 / EX-H1), this protein is Methylthioribulose-1-phosphate dehydratase.